Consider the following 243-residue polypeptide: Transmembrane protein 174 (243 aa).

The next 2 helical transmembrane spans lie at 40–60 (LLFSGIFLGLVGITFTVMGWI) and 73–93 (LLGPILLSVGVTFILIAVCKF).

In terms of assembly, interacts with SLC34A1; regulates SLC34A1 internalization by PTH and FGF23. As to expression, kidney specific. Expressed in renal primary proximal tubule cells.

The protein resides in the endoplasmic reticulum membrane. It localises to the apical cell membrane. Regulator of plasma phosphate homeostasis. Decreases serum inorganic phosphate (Pi) uptake by regulating the sodium-phosphate cotransporter SLC34A1 trafficking by PTH and FGF23 in the kidney. This chain is Transmembrane protein 174 (Tmem174), found in Mus musculus (Mouse).